The sequence spans 173 residues: Endosomal/vacuolar adapter protein YPT35 (173 aa).

The PX domain occupies 40–173 (ERAFVTNCTI…LVIQFLRPRK (134 aa)).

Belongs to the YPT35 family.

It localises to the endosome membrane. Its subcellular location is the vacuole membrane. Functionally, recruits the lipid transfer protein VPS13 to endosomal and vacuolar membranes. This Candida glabrata (strain ATCC 2001 / BCRC 20586 / JCM 3761 / NBRC 0622 / NRRL Y-65 / CBS 138) (Yeast) protein is Endosomal/vacuolar adapter protein YPT35 (YPT35).